We begin with the raw amino-acid sequence, 378 residues long: Forkhead box protein I1 (378 aa).

Disordered regions lie at residues 1–26 (MSSF…QEPP) and 208–278 (DNGN…APCL). A DNA-binding region (fork-head) is located at residues 123–217 (RPPYSYSALI…DNGNFRRKRK (95 aa)). Positions 236 to 248 (SSLPVDSPKTTEP) are enriched in polar residues.

In terms of tissue distribution, expressed in kidney.

The protein localises to the nucleus. Transcriptional activator required for the development of normal hearing, sense of balance and kidney function. Required for the expression of SLC26A4/PDS, JAG1 and COCH in a subset of epithelial cells and the development of the endolymphatic system in the inner ear. Also required for the expression of SLC4A1/AE1, SLC4A9/AE4, ATP6V1B1 and the differentiation of intercalated cells in the epithelium of distal renal tubules. This Homo sapiens (Human) protein is Forkhead box protein I1 (FOXI1).